Consider the following 603-residue polypeptide: Adenine deaminase 1 (603 aa).

The protein belongs to the metallo-dependent hydrolases superfamily. Adenine deaminase family. Requires Mn(2+) as cofactor.

It catalyses the reaction adenine + H2O + H(+) = hypoxanthine + NH4(+). In Carboxydothermus hydrogenoformans (strain ATCC BAA-161 / DSM 6008 / Z-2901), this protein is Adenine deaminase 1.